The chain runs to 189 residues: Apolipoprotein D (189 aa).

The first 20 residues, 1–20, serve as a signal peptide directing secretion; the sequence is MVMLLLLLSALAGLFGAAEG. Glutamine 21 carries the pyrrolidone carboxylic acid modification. Cystine bridges form between cysteine 28–cysteine 134 and cysteine 61–cysteine 185. 2 N-linked (GlcNAc...) (complex) asparagine glycosylation sites follow: asparagine 65 and asparagine 98.

The protein belongs to the calycin superfamily. Lipocalin family. Homodimer. In plasma, also exists as a disulfide-linked heterodimer with APOA2. N-glycosylated. N-glycan heterogeneity at Asn-65: Hex5HexNAc4 (major) and Hex6HexNAc5 (minor); at Asn-98: Hex5HexNAc4 (minor), dHex1Hex5HexNAc4 (major), dHex1Hex6HexNAc5 (minor) and dHex1Hex7HexNAc6 (minor). Expressed in liver, intestine, pancreas, kidney, placenta, adrenal, spleen, fetal brain tissue and tears.

Its subcellular location is the secreted. In terms of biological role, APOD occurs in the macromolecular complex with lecithin-cholesterol acyltransferase. It is probably involved in the transport and binding of bilin. Appears to be able to transport a variety of ligands in a number of different contexts. This chain is Apolipoprotein D (APOD), found in Homo sapiens (Human).